A 25-amino-acid polypeptide reads, in one-letter code: Dermaseptin-DI5 (25 aa).

The protein belongs to the frog skin active peptide (FSAP) family. Dermaseptin subfamily. In terms of tissue distribution, expressed by the skin glands.

The protein resides in the secreted. Functionally, antibacterial peptide with activity against Gram-positive bacteria S.aureus and E.faecalis, and Gram-negative bacteria P.aeruginosa and E.coli. This is Dermaseptin-DI5 from Phyllomedusa distincta (Monkey frog).